Reading from the N-terminus, the 355-residue chain is F-box only protein 32 (355 aa).

Positions 62–67 (KKRKKD) match the Nuclear localization signal motif. The short motif at 169–173 (LLQTL) is the Nuclear export signal element. The F-box domain occupies 223–271 (LTFTDLPLCLQLNIMQRLSDGRDLVSLGQAAPDLHVLSEDRLLWKKLCQ). The short motif at 280–295 (RKRLILSDKGQLDWKK) is the Bipartite nuclear localization signal element.

As to quaternary structure, part of the SCF (SKP1-CUL1-F-box) E3 ubiquitin-protein ligase complex SCF(FBXO32) formed of CUL1, SKP1, RBX1 and FBXO32. Specifically expressed in cardiac and skeletal muscle.

The protein resides in the cytoplasm. It is found in the nucleus. It functions in the pathway protein modification; protein ubiquitination. Its function is as follows. Substrate recognition component of a SCF (SKP1-CUL1-F-box protein) E3 ubiquitin-protein ligase complex which mediates the ubiquitination and subsequent proteasomal degradation of target proteins. Probably recognizes and binds to phosphorylated target proteins during skeletal muscle atrophy. Recognizes TERF1. This Homo sapiens (Human) protein is F-box only protein 32 (FBXO32).